A 346-amino-acid chain; its full sequence is Mitogen-activated protein kinase kinase 1c (346 aa).

The Protein kinase domain maps to 70–332 (LELVRFLGKG…TTDLLKHPFL (263 aa)). Residues 76–84 (LGKGAGGTV) and K99 each bind ATP. D194 serves as the catalytic Proton acceptor.

The protein belongs to the protein kinase superfamily. STE Ser/Thr protein kinase family. MAP kinase kinase subfamily.

It carries out the reaction L-seryl-[protein] + ATP = O-phospho-L-seryl-[protein] + ADP + H(+). The catalysed reaction is L-threonyl-[protein] + ATP = O-phospho-L-threonyl-[protein] + ADP + H(+). The enzyme catalyses L-tyrosyl-[protein] + ATP = O-phospho-L-tyrosyl-[protein] + ADP + H(+). The CERK1, MEKK1a/b, MKK1a/b/c and MPK4a/b proteins are involved in pathogen defense. The pathway induces rapid growth inhibition, cell wall depositions and accumulation of defense-related transcripts. This protein is required for full defense response to fungal pathogen chitin. The chain is Mitogen-activated protein kinase kinase 1c from Physcomitrium patens (Spreading-leaved earth moss).